The chain runs to 158 residues: MTTVIYPGTFDPITNGHMDIIQRSAVLFSKVIVAVAKNPSKQPLFNLAERVELVQLSVVHLDNVEVIGFDDLLANVVKARQIDAIIRGVRTTMDFEYESQLAHLNRLLTNGVESLFLPPTEQWSYVSSTIVRDIFLHQGDVSRLVPAAVLRALEKRAK.

Position 9 (Thr9) interacts with substrate. Residues 9 to 10 (TF) and His17 contribute to the ATP site. Positions 41, 73, and 87 each coordinate substrate. Residues 88–90 (GVR), Glu98, and 123–129 (WSYVSST) contribute to the ATP site.

It belongs to the bacterial CoaD family. Homohexamer. The cofactor is Mg(2+).

The protein resides in the cytoplasm. It carries out the reaction (R)-4'-phosphopantetheine + ATP + H(+) = 3'-dephospho-CoA + diphosphate. It participates in cofactor biosynthesis; coenzyme A biosynthesis; CoA from (R)-pantothenate: step 4/5. Functionally, reversibly transfers an adenylyl group from ATP to 4'-phosphopantetheine, yielding dephospho-CoA (dPCoA) and pyrophosphate. This is Phosphopantetheine adenylyltransferase from Histophilus somni (strain 2336) (Haemophilus somnus).